Consider the following 142-residue polypeptide: MKKIGLLLTIFSLCLGCLGLVPSDKAHAGNLNLTTWPSASILAVESRTVNNADKKLGEIGEKLDLNNSPLRSFRKYRGMFPTIAAQIVDNAPYEKVEDVLEMPGLTEEQKKLLEANLKNFTVTKTADVYNEGDYRLNTGSYD.

A signal peptide spans 1-28; sequence MKKIGLLLTIFSLCLGCLGLVPSDKAHA.

Belongs to the PsbU family. PSII is composed of 1 copy each of membrane proteins PsbA, PsbB, PsbC, PsbD, PsbE, PsbF, PsbH, PsbI, PsbJ, PsbK, PsbL, PsbM, PsbT, PsbX, PsbY, PsbZ, Psb30/Ycf12, peripheral proteins PsbO, CyanoQ (PsbQ), PsbU, PsbV and a large number of cofactors. It forms dimeric complexes.

Its subcellular location is the cellular thylakoid membrane. One of the extrinsic, lumenal subunits of photosystem II (PSII). PSII is a light-driven water plastoquinone oxidoreductase, using light energy to abstract electrons from H(2)O, generating a proton gradient subsequently used for ATP formation. The extrinsic proteins stabilize the structure of photosystem II oxygen-evolving complex (OEC), the ion environment of oxygen evolution and protect the OEC against heat-induced inactivation. The sequence is that of Photosystem II extrinsic protein U from Trichodesmium erythraeum (strain IMS101).